We begin with the raw amino-acid sequence, 550 residues long: Nucleoside hydrolase 4 (550 aa).

Belongs to the IUNH family.

It localises to the cytoplasm. Its function is as follows. May be involved in the degradation of nucleosides. The chain is Nucleoside hydrolase 4 from Arabidopsis thaliana (Mouse-ear cress).